Consider the following 848-residue polypeptide: MSYTLDSLGNPSAYRRVTETRSSFSRVSGSPSSGFRSQSWSRGSPSTVSSSYKRSALAPRLAYSSAMLSSAESSLDFSQSSSLLNGGSGGDYKLSRSNEKEQLQGLNDRFAGYIEKVHYLEQQNKEIEAEIQALRQKQASHAQLGDAYDQEIRELRATLEMVNHEKAQVQLDSDHLEEDIHRLKERFEEEARLRDDTEAAIRALRKDIEESSMVKVELDKKVQSLQDEVAFLRSNHEEEVADLLAQIQASHITVERKDYLKTDISTALKEIRSQLECHSDQNMHQAEEWFKCRYAKLTEAAEQNKEAIRSAKEEIAEYRRQLQSKSIELESVRGTKESLERQLSDIEERHNHDLSSYQDTIQQLENELRGTKWEMARHLREYQDLLNVKMALDIEIAAYRKLLEGEETRFSTFSGSITGPLYTHRQPSVTISSKIQKTKVEAPKLKVQHKFVEEIIEETKVEDEKSEMEETLTAIAEELAASAKEEKEEAEEKEEEPEAEKSPVKSPEAKEEEEEGEKEEEEEGQEEEEEEDEGVKSDQAEEGGSEKEGSSEKDEGEQEEEEGETEAEGEGEEAEAKEEKKIEGKVEEVAVKEEIKVEKPEKAKSPMPKSPVEEVKPKPEAKAGKGEQKEEEKVEEEKKEVTKESPKEEKVEKKEEKPKDVADKKKAESPVKEKAVEEVITISKSVKVSLEKDTKEEKPQPQEKVKEKAEEEGGSEEEGSDRSPQESKKEDIAINGEVEGKEEEEQETQEKGSGREEEKGVVTNGLDVSPAEEKKGEDSSDDKVVVTKKVEKITSEGGDGATKYITKSVTVTQKVEEHEETFEEKLVSTKKVEKVTSHAIVKEVTQGD.

Positions 1 to 10 (MSYTLDSLGN) are enriched in polar residues. The disordered stretch occupies residues 1–51 (MSYTLDSLGNPSAYRRVTETRSSFSRVSGSPSSGFRSQSWSRGSPSTVSSS). Ser2 bears the N-acetylserine mark. Residues 2–102 (SYTLDSLGNP…KLSRSNEKEQ (101 aa)) form a head region. Low complexity predominate over residues 21 to 44 (RSSFSRVSGSPSSGFRSQSWSRGS). At Ser30 the chain carries Phosphoserine. Arg42 is modified (omega-N-methylarginine). An O-linked (GlcNAc) threonine glycan is attached at Thr47. The residue at position 97 (Ser97) is a Phosphoserine. The region spanning 99-410 (EKEQLQGLND…KLLEGEETRF (312 aa)) is the IF rod domain. Residues 103–134 (LQGLNDRFAGYIEKVHYLEQQNKEIEAEIQAL) are coil 1A. The segment at 135–147 (RQKQASHAQLGDA) is linker 1. Positions 148-246 (YDQEIRELRA…EEEVADLLAQ (99 aa)) are coil 1B. Position 224 is a phosphoserine (Ser224). The segment at 247-263 (IQASHITVERKDYLKTD) is linker 12. A coil 2A region spans residues 264–285 (ISTALKEIRSQLECHSDQNMHQ). A linker 2 region spans residues 286–289 (AEEW). Positions 290-410 (FKCRYAKLTE…KLLEGEETRF (121 aa)) are coil 2B. Tyr318 bears the Phosphotyrosine mark. Residues Ser344, Ser416, and Ser428 each carry the phosphoserine modification. Residues 411 to 848 (STFSGSITGP…AIVKEVTQGD (438 aa)) form a tail region. The O-linked (GlcNAc) threonine glycan is linked to Thr430. Ser466 and Ser482 each carry phosphoserine. Positions 482 to 785 (SAKEEKEEAE…GEDSSDDKVV (304 aa)) are disordered. Residues 488 to 498 (EEAEEKEEEPE) are compositionally biased toward acidic residues. Positions 499-509 (AEKSPVKSPEA) are enriched in basic and acidic residues. Residues Ser502 and Ser506 each carry the phosphoserine modification. Acidic residues predominate over residues 510–533 (KEEEEEGEKEEEEEGQEEEEEEDE). Basic and acidic residues predominate over residues 534–553 (GVKSDQAEEGGSEKEGSSEK). Residues Ser537, Ser545, Ser550, and Ser551 each carry the phosphoserine modification. Residues 554 to 576 (DEGEQEEEEGETEAEGEGEEAEA) are compositionally biased toward acidic residues. Thr565 is subject to Phosphothreonine. The segment covering 577–604 (KEEKKIEGKVEEVAVKEEIKVEKPEKAK) has biased composition (basic and acidic residues). A phosphoserine mark is found at Ser605 and Ser610. Composition is skewed to basic and acidic residues over residues 611-677 (PVEE…KAVE) and 689-711 (SLEK…KAEE). Phosphothreonine is present on Thr642. Ser645, Ser669, Ser689, Ser715, Ser723, Ser753, and Ser769 each carry phosphoserine. Composition is skewed to basic and acidic residues over residues 720 to 732 (SDRS…KEDI) and 748 to 760 (TQEK…EEKG). Residues 771-785 (AEEKKGEDSSDDKVV) are compositionally biased toward basic and acidic residues.

Belongs to the intermediate filament family. As to quaternary structure, forms heterodimers with NEFL; which can further hetero-oligomerize (in vitro). Forms heterodimers with INA (in vitro). There are a number of repeats of the tripeptide K-S-P, NFM is phosphorylated on a number of the serines in this motif. It is thought that phosphorylation of NFM results in the formation of interfilament cross bridges that are important in the maintenance of axonal caliber. In terms of processing, phosphorylation seems to play a major role in the functioning of the larger neurofilament polypeptides (NF-M and NF-H), the levels of phosphorylation being altered developmentally and coincidentally with a change in the neurofilament function. Post-translationally, phosphorylated in the head and rod regions by the PKC kinase PKN1, leading to the inhibition of polymerization. Expressed in the sciatic nerve (at protein level).

The protein localises to the cytoplasm. It is found in the cytoskeleton. It localises to the cell projection. Its subcellular location is the axon. In terms of biological role, neurofilaments usually contain three intermediate filament proteins: NEFL, NEFM, and NEFH which are involved in the maintenance of neuronal caliber. May additionally cooperate with the neuronal intermediate filament proteins PRPH and INA to form neuronal filamentous networks. This Mus musculus (Mouse) protein is Neurofilament medium polypeptide (Nefm).